The sequence spans 181 residues: Adenine phosphoribosyltransferase (181 aa).

It belongs to the purine/pyrimidine phosphoribosyltransferase family. In terms of assembly, homodimer.

It localises to the cytoplasm. The catalysed reaction is AMP + diphosphate = 5-phospho-alpha-D-ribose 1-diphosphate + adenine. It participates in purine metabolism; AMP biosynthesis via salvage pathway; AMP from adenine: step 1/1. Its function is as follows. Catalyzes a salvage reaction resulting in the formation of AMP, that is energically less costly than de novo synthesis. The sequence is that of Adenine phosphoribosyltransferase from Vibrio parahaemolyticus serotype O3:K6 (strain RIMD 2210633).